A 226-amino-acid chain; its full sequence is uncharacterized protein (226 aa).

This sequence to L.innocua lin2408 and lin2600.

This is an uncharacterized protein from Listeria innocua serovar 6a (strain ATCC BAA-680 / CLIP 11262).